Reading from the N-terminus, the 76-residue chain is Small ribosomal subunit protein bS16 (76 aa).

The protein belongs to the bacterial ribosomal protein bS16 family.

The protein is Small ribosomal subunit protein bS16 of Helicobacter pylori (strain HPAG1).